A 483-amino-acid chain; its full sequence is Aspartyl/glutamyl-tRNA(Asn/Gln) amidotransferase subunit B (483 aa).

Belongs to the GatB/GatE family. GatB subfamily. In terms of assembly, heterotrimer of A, B and C subunits.

It carries out the reaction L-glutamyl-tRNA(Gln) + L-glutamine + ATP + H2O = L-glutaminyl-tRNA(Gln) + L-glutamate + ADP + phosphate + H(+). It catalyses the reaction L-aspartyl-tRNA(Asn) + L-glutamine + ATP + H2O = L-asparaginyl-tRNA(Asn) + L-glutamate + ADP + phosphate + 2 H(+). In terms of biological role, allows the formation of correctly charged Asn-tRNA(Asn) or Gln-tRNA(Gln) through the transamidation of misacylated Asp-tRNA(Asn) or Glu-tRNA(Gln) in organisms which lack either or both of asparaginyl-tRNA or glutaminyl-tRNA synthetases. The reaction takes place in the presence of glutamine and ATP through an activated phospho-Asp-tRNA(Asn) or phospho-Glu-tRNA(Gln). The polypeptide is Aspartyl/glutamyl-tRNA(Asn/Gln) amidotransferase subunit B (Rickettsia africae (strain ESF-5)).